Reading from the N-terminus, the 609-residue chain is Proteasome-associated ATPase (609 aa).

Residues 1 to 27 (MGSSERSEAFGTPRESDMSSGDEAELE) form a disordered region. Residues 17-96 (DMSSGDEAEL…LREEVDRLGQ (80 aa)) adopt a coiled-coil conformation. 296-301 (GCGKTL) provides a ligand contact to ATP. Positions 608-609 (YL) are docks into pockets in the proteasome alpha-ring.

This sequence belongs to the AAA ATPase family. In terms of assembly, homohexamer. Assembles into a hexameric ring structure that caps the 20S proteasome core. Strongly interacts with the prokaryotic ubiquitin-like protein Pup through a hydrophobic interface; the interacting region of ARC lies in its N-terminal coiled-coil domain. There is one Pup binding site per ARC hexamer ring. Upon ATP-binding, the C-terminus of ARC interacts with the alpha-rings of the proteasome core, possibly by binding to the intersubunit pockets.

It participates in protein degradation; proteasomal Pup-dependent pathway. ATPase which is responsible for recognizing, binding, unfolding and translocation of pupylated proteins into the bacterial 20S proteasome core particle. May be essential for opening the gate of the 20S proteasome via an interaction with its C-terminus, thereby allowing substrate entry and access to the site of proteolysis. Thus, the C-termini of the proteasomal ATPase may function like a 'key in a lock' to induce gate opening and therefore regulate proteolysis. The chain is Proteasome-associated ATPase from Mycobacterium avium (strain 104).